The sequence spans 352 residues: Ion-translocating oxidoreductase complex subunit D (352 aa).

4 helical membrane-spanning segments follow: residues 20–40 (IMLL…WFFG), 42–62 (GTLV…ALVL), 89–109 (IPPL…VIIA), and 123–143 (PAMI…TSWL). FMN phosphoryl threonine is present on T187. The next 5 helical transmembrane spans lie at 214–234 (ILAG…GVWL), 242–262 (WHIP…GWLF), 267–287 (LAAP…FFIL), 301–321 (LIFG…GGYP), and 322–342 (DGVA…DYYT).

This sequence belongs to the NqrB/RnfD family. In terms of assembly, the complex is composed of six subunits: RsxA, RsxB, RsxC, RsxD, RsxE and RsxG. FMN is required as a cofactor.

The protein resides in the cell inner membrane. In terms of biological role, part of a membrane-bound complex that couples electron transfer with translocation of ions across the membrane. Required to maintain the reduced state of SoxR. This is Ion-translocating oxidoreductase complex subunit D from Escherichia coli O127:H6 (strain E2348/69 / EPEC).